A 612-amino-acid polypeptide reads, in one-letter code: Baeyer-Villiger monooxygenase 4 (612 aa).

FAD contacts are provided by residues Glu-99, Thr-107 to Trp-110, Asp-119, Tyr-125, and Ala-169. An NADP(+)-binding site is contributed by Gln-117–Asp-119. Residues Thr-253–Gln-259, Arg-276–Thr-277, and Lys-393–Arg-394 each bind NADP(+).

Belongs to the FAD-binding monooxygenase family. Requires FAD as cofactor.

In terms of biological role, catalyzes a Baeyer-Villiger oxidation reaction, i.e. the insertion of an oxygen atom into a carbon-carbon bond adjacent to a carbonyl, which converts ketones to esters or lactones using NADPH as an electron donor. Has a broad substrate scope and oxidizes different compounds including substituted and unsubstituted alicyclic, bicyclic-, aliphatic-ketones, ketones with an aromatic moiety, and sulfides. The highest activities are measured for 2- and 3-methylcyclohexanone, phenylacetone, bicyclo[3.2.0]hept-2-en-6-one and menthone. Cannot use NADH instead of NADPH. Is not active on benzaldehyde. This is Baeyer-Villiger monooxygenase 4 from Dietzia sp. (strain D5).